We begin with the raw amino-acid sequence, 856 residues long: Envelope glycoprotein GP350 (856 aa).

Topologically, residues 1–809 (MEAALLVCQY…TSQPRFSNLS (809 aa)) are virion surface. 27 N-linked (GlcNAc...) asparagine; by host glycosylation sites follow: N47, N87, N114, N166, N169, N195, N229, N277, N318, N328, N345, N356, N378, N386, N411, N435, N443, N457, N497, N519, N533, N554, N568, N582, N585, N603, and N614. The interval 421-779 (FSKAPESTTT…PPSTSSELRP (359 aa)) is disordered. A compositionally biased stretch (low complexity) spans 427–437 (STTTSPTSNTT). The span at 442-488 (PNTTTGLPSSTHVPTNLTAPASTGPTVSTADVTSPTPAGTTSGASPV) shows a compositional bias: polar residues. Over residues 507–570 (TSPTPAVTTP…AVTTPTPNAT (64 aa)) the composition is skewed to low complexity. Over residues 575–616 (GETSPQANTTNHTLGGTSSTPVVTSQPKNATSAVTTGQHNIT) the composition is skewed to polar residues. The segment covering 617–631 (SSSTSSMSLRPSSIS) has biased composition (low complexity). N650 carries an N-linked (GlcNAc...) asparagine; by host glycan. Residues 654–669 (VTPASTSTHHVSTSSP) show a composition bias toward low complexity. Residues 674-690 (GTTSQASGPGNSSTSTK) show a composition bias toward polar residues. N684, N695, N704, and N729 each carry an N-linked (GlcNAc...) asparagine; by host glycan. Residues 703 to 730 (KNATSPQAPSGQKTAVPTVTSTGGKANS) are compositionally biased toward polar residues. The segment covering 731-741 (TTGGKHTTGHG) has biased composition (low complexity). Over residues 743–776 (RTSTEPTTDYGGDSTTPRTRYNATTYLPPSTSSE) the composition is skewed to polar residues. N-linked (GlcNAc...) asparagine; by host glycosylation is found at N764 and N807. Residues 810 to 830 (MLVLQWASLAVLTLLLLLVMA) form a helical membrane-spanning segment. Residues 831–856 (DCAFRRNLSTSHTYTTPPYDDAETYV) are Intravirion-facing.

It belongs to the Epstein-Barr GP350 family. As to quaternary structure, interacts with host CR2. Post-translationally, extensively glycosylated.

The protein resides in the virion membrane. The protein localises to the host membrane. Functionally, initiates virion attachment to host B-lymphocyte cell, leading to virus entry. Acts by binding to host CR2 at the surface of B-lymphocytes, facilitating the binding of viral glycoprotein gp42 to HLA class II molecules. Attachment triggers virion-host membrane fusion and invasion of the host cell. The sequence is that of Envelope glycoprotein GP350 from Homo sapiens (Human).